The chain runs to 547 residues: Natural resistance-associated macrophage protein 1 (547 aa).

Residues 1–30 (MTGDKDPQSVSRPNYGSISHPPSSEPQQEP) are disordered. Over 1-54 (MTGDKDPQSVSRPNYGSISHPPSSEPQQEPLRTTYLSEKIPIPDTEPGTFSLRK) the chain is Cytoplasmic. Polar residues predominate over residues 8–17 (QSVSRPNYGS). Low complexity predominate over residues 21 to 30 (PPSSEPQQEP). The helical transmembrane segment at 55-75 (LWAFTGPGFLMSIAFLDPGNI) threads the bilayer. Residues 76-81 (ESDLQA) lie on the Extracellular side of the membrane. A helical transmembrane segment spans residues 82 to 102 (GAVAGFKLLWVLLWATVLGLL). Residues 103–139 (CQRLAARLGVVTGKDLGEICHLYYPKVPRTLLWLTIE) are Cytoplasmic-facing. The helical transmembrane segment at 140–160 (LAIVGSDMQEVIGTAIAFSLL) threads the bilayer. Over 161–164 (SAGR) the chain is Extracellular. The helical transmembrane segment at 165-185 (IPLWGGVLITIVDTFFFLFLD) threads the bilayer. The Cytoplasmic portion of the chain corresponds to 186–193 (NYGLRKLE). Residues 194–214 (AFFGILITIMALTFGYEYVVA) traverse the membrane as a helical segment. Over 215-240 (RPAQVALLQGLLLPSCPGCGRPELLQ) the chain is Extracellular. The chain crosses the membrane as a helical span at residues 241-261 (AVGIVGAIIMPHNIYLHSALV). Topologically, residues 262–286 (KSREIDRSRRPDIREANMYFLIEAS) are cytoplasmic. Residues 287 to 307 (IALSVSFFINLFVVAVFGQAF) traverse the membrane as a helical segment. Residues 308–346 (YQQTNEAAFNVCANSSLHDYAKIFPRNNLTVEVDIYQGG) lie on the Extracellular side of the membrane. 2 N-linked (GlcNAc...) asparagine glycosylation sites follow: N321 and N335. The helical transmembrane segment at 347–367 (VMLGCVFGPAALYIWAVGLLA) threads the bilayer. Residues 368–394 (AGQSSTMTGTYAGQFVMEGFLRLRWSR) lie on the Cytoplasmic side of the membrane. The chain crosses the membrane as a helical span at residues 395–415 (FARVLLTRSCAILPTVLVVVF). The Extracellular segment spans residues 416-432 (RDLKDLSGLNDLLNVLQ). A helical membrane pass occupies residues 433–453 (SLLLPFAVLPILTFTSMPALM). Residues 454-464 (QEFANGRLSKA) are Cytoplasmic-facing. The chain crosses the membrane as a helical span at residues 465-485 (ITSFIMALVCAINLYFVVIYL). Over 486-492 (PSLPHPA) the chain is Extracellular. Residues 493–513 (YFILVALLAIVYLGLTTYLVW) traverse the membrane as a helical segment. Residues 514–547 (TCFIAHGVTLLAHSSHQHFLYGLPDVEEKGKISG) are Cytoplasmic-facing.

It belongs to the NRAMP family.

The protein resides in the late endosome membrane. Its subcellular location is the lysosome membrane. It catalyses the reaction Zn(2+)(in) + H(+)(out) = Zn(2+)(out) + H(+)(in). The enzyme catalyses Fe(2+)(in) + H(+)(out) = Fe(2+)(out) + H(+)(in). It carries out the reaction Mn(2+)(in) + H(+)(out) = Mn(2+)(out) + H(+)(in). Its function is as follows. Macrophage-specific antiporter that fluxes metal ions in either direction against a proton gradient. Localized to late endosomal lysosomal membranes, delivers bivalent cations from the cytosol into these acidic compartments where they may directly affect antimicrobial activity. Involved in iron metabolism and host natural resistance to infection with intracellular parasites. Pathogen resistance involves sequestration of Fe(2+) and Mn(2+), cofactors of both prokaryotic and eukaryotic catalases and superoxide dismutases, not only to protect the macrophage against its own generation of reactive oxygen species, but to deny the cations to the pathogen for synthesis of its protective enzymes. The sequence is that of Natural resistance-associated macrophage protein 1 (SLC11A1) from Canis lupus familiaris (Dog).